Reading from the N-terminus, the 531-residue chain is uncharacterized protein (531 aa).

Positions Met1 to Ala28 are cleaved as a signal peptide. SLH domains are found at residues Glu29–Lys85, Gln86–Leu149, and Pro150–Met210. The MurNAc-LAA domain occupies Ile335–Leu517.

This sequence in the C-terminal section; belongs to the N-acetylmuramoyl-L-alanine amidase 3 family.

Its subcellular location is the secreted. It is found in the cell wall. The protein localises to the S-layer. This is an uncharacterized protein from Bacillus anthracis.